Reading from the N-terminus, the 644-residue chain is MPEIKRLPESVANQISAGEVVERPASVVKELVENSLDAGSNKILIEIENGGKDLIRVKDNGHGIPSDEIEIAFDRYATSKITDINDLYSLKSLGFRGEALASIASVSILDIISRTKSQTKAIKMRLKGGKVISKEPCGASVGTDIIVKDLFFNTPARYKYLKTTRNEFKHISNIITREALAYPGVNFTLIHNGRIVLKTPGTGKTLDCIYAIYGKEMAQSLVKIDYEDRYIKVSGYISRPDYYRYNRSYEIFFVNKRAVHNSILNRGVEEAYQGLLPPGAYPVVFLNLKLNPILVDVNVHPTKKEVKFSRDKVIKEVIQNGINIELSKLDKSPRLKRNINPLNRDDKTKDKSEYQKIKLPEDKEQITNKSSDAGILKNQNPLDSQDSILLPSKKNGFYSKKNSQVSQNKFMDINNKLEKTEINDNYKKDKHYKTDSINIKDNSIKENKNKMDIPIKRVLGQIKNTYIIAEGRDGLYIIDQHNAHERILYQSFIEKYNNSEIVSQPLVVPVNIETTAPEAEVLKSYLPQLEKMGFKLEVFGINSFIVREVPSLIKKRSNKRVVREVIDKLLEHDKAMKPSELINEIISYMSCRGAIKAGEYLDKKEAEQIIEGLFKTDNPYRCPHGRPIIIHITEDDINKGMGRK.

The interval 336 to 356 (KRNINPLNRDDKTKDKSEYQK) is disordered. Over residues 343–356 (NRDDKTKDKSEYQK) the composition is skewed to basic and acidic residues.

The protein belongs to the DNA mismatch repair MutL/HexB family.

Functionally, this protein is involved in the repair of mismatches in DNA. It is required for dam-dependent methyl-directed DNA mismatch repair. May act as a 'molecular matchmaker', a protein that promotes the formation of a stable complex between two or more DNA-binding proteins in an ATP-dependent manner without itself being part of a final effector complex. This chain is DNA mismatch repair protein MutL, found in Halothermothrix orenii (strain H 168 / OCM 544 / DSM 9562).